The sequence spans 224 residues: uncharacterized protein (224 aa).

5 helical membrane-spanning segments follow: residues 32-52, 60-80, 100-120, 130-150, and 162-182; these read ILTLCQLLSPSMLVLHYPLVV, LFTNYLYAGTGFDFIMNIYFF, IIYLVKVALLIDAFSLISGLG, AIAYNWSLFNSFSKIQFLFGF, and LGFSFLTGGLPSLVVLGFGII.

This sequence belongs to the derlin family.

The protein localises to the endoplasmic reticulum membrane. This is an uncharacterized protein from Schizosaccharomyces pombe (strain 972 / ATCC 24843) (Fission yeast).